Reading from the N-terminus, the 622-residue chain is Chaperone protein HscA homolog (622 aa).

It belongs to the heat shock protein 70 family.

Its function is as follows. Chaperone involved in the maturation of iron-sulfur cluster-containing proteins. Has a low intrinsic ATPase activity which is markedly stimulated by HscB. This Burkholderia pseudomallei (strain 1710b) protein is Chaperone protein HscA homolog.